A 372-amino-acid polypeptide reads, in one-letter code: MNRSHRHGAGSGCLGTMEVKSKFGAEFRRFSLERSKPGKFEEFYGLLQHVHKIPNVDVLVGYADIHGDLLPINNDDNYHKAVSTANPLLRIFIQKKEEADYSAFGTDTLIKKKNVLTNVLRPDNHRKKPHIVISMPQDFRPVSSIIDVDILPETHRRVRLYKYGTEKPLGFYIRDGSSVRVTPHGLEKVPGIFISRLVPGGLAQSTGLLAVNDEVLEVNGIEVSGKSLDQVTDMMIANSRNLIITVRPANQRNNVVRNSRTSGSSGQSTDNSLLGYPQQIEPSFEPEDEDSEEDDIIIEDNGVPQQIPKAVPNTESLESLTQIELSFESGQNGFIPSNEVSLAAIASSSNTEFETHAPDQKLLEEDGTIITL.

Serine 11 carries the post-translational modification Phosphoserine. The PB1 domain occupies 16–96 (TMEVKSKFGA…PLLRIFIQKK (81 aa)). The interval 126–253 (RKKPHIVISM…ITVRPANQRN (128 aa)) is interaction with PARD3 and CDC42. A Pseudo-CRIB domain is found at 133 to 150 (ISMPQDFRPVSSIIDVDI). Residues 157–250 (RVRLYKYGTE…NLIITVRPAN (94 aa)) form the PDZ domain. Positions 253 to 272 (NNVVRNSRTSGSSGQSTDNS) are enriched in polar residues. A disordered region spans residues 253-292 (NNVVRNSRTSGSSGQSTDNSLLGYPQQIEPSFEPEDEDSE).

It belongs to the PAR6 family. As to quaternary structure, interacts with PARD3. Interacts with GTP-bound forms of CDC42 and RAC1. Interacts with GTP-bound RHOQ/TC10. Interacts with PALS1. Interacts with the N-terminal part of PRKCI and PRKCZ. Part of a complex with PARD3, CDC42 or RAC1 and PRKCI or PRKCZ. Part of a complex with LLGL1 and PRKCI. Interacts with PARD3B. Interacts with ECT2. In terms of tissue distribution, expressed in pancreas and in both adult and fetal kidney. Weakly expressed in placenta and lung. Not expressed in other tissues.

Its subcellular location is the cytoplasm. It localises to the cell membrane. The protein resides in the cell junction. The protein localises to the tight junction. Adapter protein involved in asymmetrical cell division and cell polarization processes. Probably involved in formation of epithelial tight junctions. Association with PARD3 may prevent the interaction of PARD3 with F11R/JAM1, thereby preventing tight junction assembly. The PARD6-PARD3 complex links GTP-bound Rho small GTPases to atypical protein kinase C proteins. The sequence is that of Partitioning defective 6 homolog beta (PARD6B) from Homo sapiens (Human).